The chain runs to 399 residues: MAQRQPHSPNQTLISITNDTESSSSVVSNDNTNKGWSGDNSPGIEALCAIYITYAVIISVGILGNAILIKVFFKTKSMQTVPNIFITSLAFGDLLLLLTCVPVDATHYLAEGWLFGRIGCKVLSFIRLTSVGVSVFTLTILSADRYKAVVKPLERQPSNAILKTCVKAGCVWIVSMIFALPEAIFSNVYTFRDPNKNMTFESCTSYPVSKKLLQEIHSLLCFLVFYIIPLSIISVYYSLIARTLYKSTLNIPTEEQSHARKQIESRKRIARTVLVLVALFALCWLPNHLLYLYHSFTSQTYVDPSAMHFIFTIFSRVLAFSNSCVNPFALYWLSKSFQKHFKAQLFCCKAERPEPPVADTSLTTLAVMGTVPGTGSIQMSEISVTSFTGCSVKQAEDRF.

The Extracellular segment spans residues 1–41 (MAQRQPHSPNQTLISITNDTESSSSVVSNDNTNKGWSGDNS). Residues Asn-10 and Asn-18 are each glycosylated (N-linked (GlcNAc...) asparagine). Residues 42-63 (PGIEALCAIYITYAVIISVGIL) form a helical membrane-spanning segment. Residues 64–82 (GNAILIKVFFKTKSMQTVP) lie on the Cytoplasmic side of the membrane. Residues 83–103 (NIFITSLAFGDLLLLLTCVPV) form a helical membrane-spanning segment. The Extracellular portion of the chain corresponds to 104 to 121 (DATHYLAEGWLFGRIGCK). Cys-120 and Cys-203 are disulfide-bonded. Residues 122–143 (VLSFIRLTSVGVSVFTLTILSA) form a helical membrane-spanning segment. At 144 to 163 (DRYKAVVKPLERQPSNAILK) the chain is on the cytoplasmic side. The chain crosses the membrane as a helical span at residues 164–184 (TCVKAGCVWIVSMIFALPEAI). The Extracellular portion of the chain corresponds to 185–220 (FSNVYTFRDPNKNMTFESCTSYPVSKKLLQEIHSLL). The chain crosses the membrane as a helical span at residues 221–241 (CFLVFYIIPLSIISVYYSLIA). Residues 242–272 (RTLYKSTLNIPTEEQSHARKQIESRKRIART) lie on the Cytoplasmic side of the membrane. A helical transmembrane segment spans residues 273 to 293 (VLVLVALFALCWLPNHLLYLY). Topologically, residues 294–313 (HSFTSQTYVDPSAMHFIFTI) are extracellular. The helical transmembrane segment at 314-333 (FSRVLAFSNSCVNPFALYWL) threads the bilayer. The Cytoplasmic portion of the chain corresponds to 334-399 (SKSFQKHFKA…CSVKQAEDRF (66 aa)). A lipid anchor (S-palmitoyl cysteine) is attached at Cys-347.

Belongs to the G-protein coupled receptor 1 family. Interacts with C6orf89. In germ cells in testis. Lung carcinoma cells.

Its subcellular location is the cell membrane. Its function is as follows. Role in sperm cell division, maturation, or function. This receptor mediates its action by association with G proteins that activate a phosphatidylinositol-calcium second messenger system. In Homo sapiens (Human), this protein is Bombesin receptor subtype-3 (BRS3).